The primary structure comprises 227 residues: Urease accessory protein UreF (227 aa).

It belongs to the UreF family. UreD, UreF and UreG form a complex that acts as a GTP-hydrolysis-dependent molecular chaperone, activating the urease apoprotein by helping to assemble the nickel containing metallocenter of UreC. The UreE protein probably delivers the nickel.

It is found in the cytoplasm. In terms of biological role, required for maturation of urease via the functional incorporation of the urease nickel metallocenter. This Actinobacillus pleuropneumoniae serotype 5b (strain L20) protein is Urease accessory protein UreF.